Reading from the N-terminus, the 456-residue chain is tRNA modification GTPase MnmE (456 aa).

The (6S)-5-formyl-5,6,7,8-tetrahydrofolate site is built by Arg-25, Glu-87, and Arg-126. The TrmE-type G domain occupies 221 to 377 (GLKVAIVGQP…LENAIIEQVN (157 aa)). Asn-231 provides a ligand contact to K(+). GTP is bound by residues 231-236 (NVGKSS), 250-256 (TDLPGTT), and 275-278 (DTAG). Mg(2+) is bound at residue Ser-235. The K(+) site is built by Thr-250, Leu-252, and Thr-255. Thr-256 contacts Mg(2+). Lys-456 lines the (6S)-5-formyl-5,6,7,8-tetrahydrofolate pocket.

The protein belongs to the TRAFAC class TrmE-Era-EngA-EngB-Septin-like GTPase superfamily. TrmE GTPase family. In terms of assembly, homodimer. Heterotetramer of two MnmE and two MnmG subunits. K(+) serves as cofactor.

It is found in the cytoplasm. In terms of biological role, exhibits a very high intrinsic GTPase hydrolysis rate. Involved in the addition of a carboxymethylaminomethyl (cmnm) group at the wobble position (U34) of certain tRNAs, forming tRNA-cmnm(5)s(2)U34. This Synechocystis sp. (strain ATCC 27184 / PCC 6803 / Kazusa) protein is tRNA modification GTPase MnmE.